Reading from the N-terminus, the 187-residue chain is Small ribosomal subunit protein uS4 (187 aa).

The region spanning 105–174 (RRLQTLVFRK…DNHPERAKIV (70 aa)) is the S4 RNA-binding domain.

This sequence belongs to the universal ribosomal protein uS4 family. Part of the 30S ribosomal subunit. Contacts protein S5. The interaction surface between S4 and S5 is involved in control of translational fidelity.

Functionally, one of the primary rRNA binding proteins, it binds directly to 16S rRNA where it nucleates assembly of the body of the 30S subunit. In terms of biological role, with S5 and S12 plays an important role in translational accuracy. The protein is Small ribosomal subunit protein uS4 of Methanocaldococcus jannaschii (strain ATCC 43067 / DSM 2661 / JAL-1 / JCM 10045 / NBRC 100440) (Methanococcus jannaschii).